Reading from the N-terminus, the 132-residue chain is Large ribosomal subunit protein uL14 (132 aa).

This sequence belongs to the universal ribosomal protein uL14 family. Part of the 50S ribosomal subunit. Forms a cluster with proteins L3 and L24e, part of which may contact the 16S rRNA in 2 intersubunit bridges.

Its function is as follows. Binds to 23S rRNA. Forms part of two intersubunit bridges in the 70S ribosome. The chain is Large ribosomal subunit protein uL14 from Methanosarcina barkeri (strain Fusaro / DSM 804).